A 427-amino-acid polypeptide reads, in one-letter code: Trigger factor (427 aa).

Residues 163-248 (GDTVVIDFVG…IHEVKAKEVP (86 aa)) enclose the PPIase FKBP-type domain.

It belongs to the FKBP-type PPIase family. Tig subfamily.

It is found in the cytoplasm. The catalysed reaction is [protein]-peptidylproline (omega=180) = [protein]-peptidylproline (omega=0). Involved in protein export. Acts as a chaperone by maintaining the newly synthesized protein in an open conformation. Functions as a peptidyl-prolyl cis-trans isomerase. This is Trigger factor from Streptococcus pneumoniae (strain 70585).